The sequence spans 771 residues: Endoplasmin homolog (771 aa).

An N-terminal signal peptide occupies residues 1 to 24 (MANSSLLRVVLVALLLLGSVTVSA). The ATP site is built by Asn-63, Asp-109, and Phe-160. N-linked (GlcNAc...) asparagine glycosylation is present at Asn-63. The tract at residues 254–282 (AATPESAAEERSLDEGAVEEDPDKEGDTQ) is disordered. 2 N-linked (GlcNAc...) asparagine glycosylation sites follow: Asn-306 and Asn-402. A disordered region spans residues 727–771 (ADDSLLPPDDAEYTVSDTETEEEEEQPKVDTNAHEEAETDGEGDL). Over residues 752-762 (QPKVDTNAHEE) the composition is skewed to basic and acidic residues. A Prevents secretion from ER motif is present at residues 768–771 (EGDL).

This sequence belongs to the heat shock protein 90 family. As to quaternary structure, homotetramer.

The protein localises to the endoplasmic reticulum. Its function is as follows. Molecular chaperone that functions in the processing and transport of secreted proteins. Required for the synthesis of lipophosphoglycan (LPG), a cell surface glycoconjugate. Necessary for the attachment of the galactosyl residue to the mannose within the phosphoglycan repeats of the nascent LPG chain. Also required for addition of phosphoglycan to acid phosphatase. Not required for normal growth. Has ATPase activity. Binds heparin with micromolar affinity which may facilitate infection of host cells. The protein is Endoplasmin homolog of Leishmania donovani.